The sequence spans 677 residues: Pannexin-2 (677 aa).

Over 11–53 (MATALLAGEKLRELILPGSQDDKAGALAALLLQLKLELPFDRV) the chain is Cytoplasmic. Residues 54 to 74 (VTIGTVLVPILLVTLVFTKNF) form a helical membrane-spanning segment. Topologically, residues 75–125 (AEEPIYCYTPHNFTRDQALYARGYCWTELRDALPGVDASLWPSLFEHKFLP) are extracellular. Asparagine 86 is a glycosylation site (N-linked (GlcNAc...) asparagine). The chain crosses the membrane as a helical span at residues 126–146 (YALLAFAAIMYVPALGWEFLA). The Cytoplasmic portion of the chain corresponds to 147 to 230 (STRLTSELNF…NFLAKLYLAR (84 aa)). A helical transmembrane segment spans residues 231–251 (HVLILLLSVVPISYLCTYYAT). Topologically, residues 252-295 (QKQNEFTCALGASPDGPVGSAGPTVRVSCKLPSVQLQRIIAGVD) are extracellular. A helical membrane pass occupies residues 296–316 (IVLLCFMNLIILVNLIHLFIF). Residues 317–617 (RKSNFIFDKL…LGKADPLTIL (301 aa)) lie on the Cytoplasmic side of the membrane. Residues 394 to 408 (TTPTVRDSGIQTVDP) show a composition bias toward polar residues. Disordered stretches follow at residues 394 to 425 (TTPTVRDSGIQTVDPSINPAEPDGSAEPPVVK) and 485 to 512 (AHHYKGSGGDSGPSSAPPAASEKKHTRH). Phosphoserine occurs at positions 593 and 604.

The protein belongs to the pannexin family. In terms of assembly, homoheptameric. Post-translationally, S-palmitoylated in neural stem and progenitor cells. In terms of processing, cleaved by CASP3 and CASP7 during apoptosis. Cleavage has no effect on it function. In terms of tissue distribution, expression is enriched in central nervous system. Expressed in suprabasal layers of skin epidermis. As to expression, more aboundantly expressed in skin.

The protein resides in the cell membrane. The protein localises to the golgi apparatus membrane. It is found in the endoplasmic reticulum membrane. The catalysed reaction is ATP(in) = ATP(out). It catalyses the reaction chloride(in) = chloride(out). The enzyme catalyses iodide(out) = iodide(in). It carries out the reaction Na(+)(in) = Na(+)(out). The catalysed reaction is D-gluconate(in) = D-gluconate(out). Ion channel with a slight anion preference. Also able to release ATP. Plays a role in regulating neurogenesis and apoptosis in keratinocytes. The sequence is that of Pannexin-2 (Panx2) from Mus musculus (Mouse).